Reading from the N-terminus, the 1135-residue chain is Integrin alpha-7 (1135 aa).

The N-terminal stretch at 1–33 (MARIPRCDFLGLPGICYLLSFLLAGLLLPRASA) is a signal peptide. The Extracellular portion of the chain corresponds to 34 to 1036 (FNLDVMGAIR…VAVVAEGVPW (1003 aa)). FG-GAP repeat units follow at residues 38–103 (VMGA…ETDC), 110–165 (RGAN…RCFV), 185–238 (EGRP…DPDQ), 248–305 (DRLT…ASRL), 306–367 (IPEV…HWAD), 368–423 (ISPL…GVVT), and 427–486 (QVLE…IDPR). Residue Asn-86 is glycosylated (N-linked (GlcNAc...) asparagine). Cystine bridges form between Cys-94–Cys-103, Cys-140–Cys-163, and Cys-184–Cys-197. Residues Asp-328, Asn-330, Asp-332, Asp-336, Asp-390, Asn-392, Asp-394, Asp-398, Asp-448, Asp-450, Asn-452, Tyr-454, and Asp-456 each contribute to the Ca(2+) site. Cystine bridges form between Cys-495/Cys-502, Cys-508/Cys-571, Cys-637/Cys-643, Cys-736/Cys-747, Cys-894/Cys-948, and Cys-955/Cys-960. Asn-741 carries N-linked (GlcNAc...) asparagine glycosylation. A compositionally biased stretch (basic and acidic residues) spans 905 to 916 (VDSRDRRRRELG). The interval 905 to 933 (VDSRDRRRRELGQPEPQEPPEKVEPSTSW) is disordered. N-linked (GlcNAc...) asparagine glycosylation is present at Asn-943. N-linked (GlcNAc...) asparagine glycosylation is found at Asn-979 and Asn-999. The helical transmembrane segment at 1037–1057 (WVILLAVLAGLLVLALLVLLL) threads the bilayer. Residues 1058-1135 (WKLGFFKRAK…PDGHPVSVTA (78 aa)) lie on the Cytoplasmic side of the membrane. The GFFKR motif motif lies at 1061-1065 (GFFKR). 3 consecutive repeat copies span residues 1111–1114 (DAHP), 1119–1122 (DWHP), and 1127–1130 (DGHP). Residues 1111 to 1130 (DAHPILAADWHPELGPDGHP) form a 3 X 4 AA repeats of D-X-H-P region.

This sequence belongs to the integrin alpha chain family. Interacts (via C-terminus intracellular tail region) with CIB1; the interaction is stabilized/increased in a calcium- and magnesium-dependent manner. Heterodimer of an alpha and a beta subunit. The alpha subunit is composed of a heavy and a light chain linked by a disulfide bond. Alpha-7 associates with beta-1. Interacts with COMP. ADP-ribosylated on at least two sites of the extracellular domain in skeletal myotubes. In terms of processing, a 70 kDa form is created by proteolytic cleavage. Cleavage is elevated during myogenic differentiation and the cleaved form enhances cell adhesion and spreading on laminin. Expressed in skeletal and cardiac muscle. Expressed in replicating myoblasts. In differentiated muscle fibers localizes between fibers and the surrounding matrix. Isoform Alpha-7X1A and isoform Alpha-7X1B are expressed at myotendinous and neuromuscular junctions; isoform Alpha-7X1C is expressed at neuromuscular junctions and at extrasynaptic sites.

It is found in the membrane. Its function is as follows. Integrin alpha-7/beta-1 is the primary laminin receptor on skeletal myoblasts and adult myofibers. During myogenic differentiation, it may induce changes in the shape and mobility of myoblasts, and facilitate their localization at laminin-rich sites of secondary fiber formation. Involved in the maintenance of the myofibers cytoarchitecture as well as for their anchorage, viability and functional integrity. Required to promote contractile phenotype acquisition in differentiated airway smooth muscle (ASM) cells. Acts as a Schwann cell receptor for laminin-2. Acts as a receptor of COMP and mediates its effect on vascular smooth muscle cells (VSMCs) maturation. The polypeptide is Integrin alpha-7 (Itga7) (Rattus norvegicus (Rat)).